The sequence spans 371 residues: Queuine tRNA-ribosyltransferase (371 aa).

The Proton acceptor role is filled by Asp90. Residues 90-94 (DSGGF), Asp144, Gln189, and Gly215 each bind substrate. The RNA binding stretch occupies residues 246-252 (GVGTPEN). Asp265 acts as the Nucleophile in catalysis. Residues 270 to 274 (TRNAR) form an RNA binding; important for wobble base 34 recognition region. 4 residues coordinate Zn(2+): Cys303, Cys305, Cys308, and His334.

It belongs to the queuine tRNA-ribosyltransferase family. Homodimer. Within each dimer, one monomer is responsible for RNA recognition and catalysis, while the other monomer binds to the replacement base PreQ1. The cofactor is Zn(2+).

It carries out the reaction 7-aminomethyl-7-carbaguanine + guanosine(34) in tRNA = 7-aminomethyl-7-carbaguanosine(34) in tRNA + guanine. It functions in the pathway tRNA modification; tRNA-queuosine biosynthesis. In terms of biological role, catalyzes the base-exchange of a guanine (G) residue with the queuine precursor 7-aminomethyl-7-deazaguanine (PreQ1) at position 34 (anticodon wobble position) in tRNAs with GU(N) anticodons (tRNA-Asp, -Asn, -His and -Tyr). Catalysis occurs through a double-displacement mechanism. The nucleophile active site attacks the C1' of nucleotide 34 to detach the guanine base from the RNA, forming a covalent enzyme-RNA intermediate. The proton acceptor active site deprotonates the incoming PreQ1, allowing a nucleophilic attack on the C1' of the ribose to form the product. After dissociation, two additional enzymatic reactions on the tRNA convert PreQ1 to queuine (Q), resulting in the hypermodified nucleoside queuosine (7-(((4,5-cis-dihydroxy-2-cyclopenten-1-yl)amino)methyl)-7-deazaguanosine). The sequence is that of Queuine tRNA-ribosyltransferase from Helicobacter pylori (strain HPAG1).